Here is a 650-residue protein sequence, read N- to C-terminus: Aminopeptidase B (650 aa).

Residue Ser-7 is modified to Phosphoserine. Residue 298–302 (GGMEN) coordinates substrate. His-325 lines the Zn(2+) pocket. Glu-326 functions as the Proton acceptor in the catalytic mechanism. Residues His-329 and Glu-348 each contribute to the Zn(2+) site. Position 446 is an N6-acetyllysine (Lys-446).

The protein belongs to the peptidase M1 family. In terms of assembly, monomer. The cofactor is Zn(2+). As to expression, widely expressed.

It localises to the secreted. It catalyses the reaction Release of N-terminal Arg and Lys from oligopeptides when P1' is not Pro. Also acts on arylamides of Arg and Lys.. Functionally, exopeptidase which selectively removes arginine and/or lysine residues from the N-terminus of several peptide substrates including Arg(0)-Leu-enkephalin, Arg(0)-Met-enkephalin and Arg(-1)-Lys(0)-somatostatin-14. Can hydrolyze leukotriene A4 (LTA-4) into leukotriene B4 (LTB-4). This is Aminopeptidase B (Rnpep) from Rattus norvegicus (Rat).